The chain runs to 139 residues: Ribosome-binding factor A (139 aa).

Residues 120 to 139 (PENLLAVEDNTDEDDESFSE) form a disordered region. The segment covering 128-139 (DNTDEDDESFSE) has biased composition (acidic residues).

It belongs to the RbfA family. As to quaternary structure, monomer. Binds 30S ribosomal subunits, but not 50S ribosomal subunits or 70S ribosomes.

It is found in the cytoplasm. One of several proteins that assist in the late maturation steps of the functional core of the 30S ribosomal subunit. Associates with free 30S ribosomal subunits (but not with 30S subunits that are part of 70S ribosomes or polysomes). Required for efficient processing of 16S rRNA. May interact with the 5'-terminal helix region of 16S rRNA. This chain is Ribosome-binding factor A, found in Nostoc punctiforme (strain ATCC 29133 / PCC 73102).